We begin with the raw amino-acid sequence, 1405 residues long: DNA-directed RNA polymerase subunit beta' (1405 aa).

Residues Cys-70, Cys-72, Cys-85, and Cys-88 each coordinate Zn(2+). Mg(2+) contacts are provided by Asp-460, Asp-462, and Asp-464. Residues Cys-814, Cys-888, Cys-895, and Cys-898 each contribute to the Zn(2+) site.

The protein belongs to the RNA polymerase beta' chain family. In terms of assembly, the RNAP catalytic core consists of 2 alpha, 1 beta, 1 beta' and 1 omega subunit. When a sigma factor is associated with the core the holoenzyme is formed, which can initiate transcription. It depends on Mg(2+) as a cofactor. Requires Zn(2+) as cofactor.

The enzyme catalyses RNA(n) + a ribonucleoside 5'-triphosphate = RNA(n+1) + diphosphate. In terms of biological role, DNA-dependent RNA polymerase catalyzes the transcription of DNA into RNA using the four ribonucleoside triphosphates as substrates. The polypeptide is DNA-directed RNA polymerase subunit beta' (Shewanella sediminis (strain HAW-EB3)).